Here is an 88-residue protein sequence, read N- to C-terminus: Large ribosomal subunit protein bL27 (88 aa).

Residues 1-21 (MAHKKAGGSSRNGRDSDGRRL) form a disordered region.

It belongs to the bacterial ribosomal protein bL27 family.

The chain is Large ribosomal subunit protein bL27 from Methylobacterium nodulans (strain LMG 21967 / CNCM I-2342 / ORS 2060).